Here is a 649-residue protein sequence, read N- to C-terminus: Quinol oxidase subunit 1 (649 aa).

The Extracellular portion of the chain corresponds to 1 to 15 (MKFKWDEFFVTGDPL). A helical transmembrane segment spans residues 16 to 34 (ILGAQVSIALSTIAIIFVL). At 35–56 (TYFKKWKWLWSEWITTVDHKKL) the chain is on the cytoplasmic side. Residues 57-75 (GIMYIISAVIMLFRGGVDG) traverse the membrane as a helical segment. Over 76–97 (LMMRAQLALPNNSFLDSNHYNE) the chain is Extracellular. The helical transmembrane segment at 98–117 (IFTTHGTIMIIFMAMPFLIG) threads the bilayer. Residue H102 participates in Fe(II)-heme a binding. Over 118–139 (LINVVVPLQIGARDVAFPYLNN) the chain is Cytoplasmic. The helical transmembrane segment at 140–157 (LSFWTFFVGAMLFNISFV) threads the bilayer. The Extracellular portion of the chain corresponds to 158–190 (IGGSPNAGWTSYMPLASNDMSPGPGENYYLLGL). Residues 191–209 (QIAGIGTLMTGINFMVTIL) traverse the membrane as a helical segment. Topologically, residues 210-227 (KMRTKGMTLMRMPMFTWT) are cytoplasmic. The helical transmembrane segment at 228–246 (TLITMVIIVFAFPVLTVAL) threads the bilayer. The Extracellular segment spans residues 247–272 (ALLSFDRLFGAHFFTLEAGGMPMLWA). A helical membrane pass occupies residues 273–292 (NLFWIWGHPEVYIVILPAFG). Positions 280 and 284 each coordinate Cu cation. Positions 280–284 (HPEVY) form a cross-link, 1'-histidyl-3'-tyrosine (His-Tyr). Over 293–315 (IFSEIISSFARKQLFGYKAMVGS) the chain is Cytoplasmic. The helical transmembrane segment at 316–335 (IIAISVLSFLVWTHHFFTMG) threads the bilayer. Cu cation contacts are provided by H329 and H330. The Extracellular segment spans residues 336-343 (NSASVNSF). A helical membrane pass occupies residues 344–362 (FSITTMAISIPTGVKIFNW). Topologically, residues 363-377 (LFTMYKGRISFTTPM) are cytoplasmic. A helical membrane pass occupies residues 378–397 (LWALAFIPNFVIGGVTGVML). Topologically, residues 398–405 (AMAAADYQ) are extracellular. A helical transmembrane segment spans residues 406 to 425 (YHNTYFLVSHFHYVLIAGTV). H415 serves as a coordination point for heme a3. H417 contributes to the Fe(II)-heme a binding site. Residues 426–452 (FACFAGFIFWYPKMFGHKLNERIGKWF) are Cytoplasmic-facing. Residues 453–472 (FWIFMIGFNICFFPQYFLGL) form a helical membrane-spanning segment. Over 473-490 (QGMPRRIYTYGPNDGWTT) the chain is Extracellular. The helical transmembrane segment at 491–510 (LNFISTVGAFMMGVGFLILC) threads the bilayer. Residues 511–584 (YNIYYSFRYS…SKFKKIHMPS (74 aa)) are Cytoplasmic-facing. The helical transmembrane segment at 585–604 (NSGRPFFMSVAFGLAGFGLV) threads the bilayer. Residues 605-610 (FEWYWM) are Extracellular-facing. The helical transmembrane segment at 611–631 (GVVGLIGVLLCMVLRSFEYDN) threads the bilayer. Residues 632 to 649 (GYYISVDEIKETERKISE) lie on the Cytoplasmic side of the membrane.

This sequence belongs to the heme-copper respiratory oxidase family. It depends on Cu cation as a cofactor. Ferriheme a serves as cofactor. The cofactor is Heme A3..

It localises to the cell membrane. The enzyme catalyses 2 a quinol + O2 = 2 a quinone + 2 H2O. It participates in energy metabolism; oxidative phosphorylation. Catalyzes quinol oxidation with the concomitant reduction of oxygen to water. Major component for energy conversion during vegetative growth. This chain is Quinol oxidase subunit 1 (qoxB), found in Bacillus subtilis (strain 168).